The following is a 47-amino-acid chain: PhoP/PhoQ regulator MgrB (47 aa).

A helical transmembrane segment spans residues 6–26 (WVVLGIVVVVCLLLWAQVFNI).

This sequence belongs to the MgrB family. May form homooligomers. Probably interacts with the periplasmic domain of PhoQ.

The protein localises to the cell inner membrane. Its function is as follows. PhoP-regulated transcription is redox-sensitive, being activated when the periplasm becomes more reducing. MgrB acts between DsbA/DsbB and PhoP/PhoQ in this pathway. Represses PhoP/PhoQ signaling, possibly by binding to the periplasmic domain of PhoQ, altering its activity and that of downstream effector PhoP. The sequence is that of PhoP/PhoQ regulator MgrB from Salmonella gallinarum (strain 287/91 / NCTC 13346).